Consider the following 1155-residue polypeptide: Polarized growth protein rax2 (1155 aa).

Positions 1–27 are cleaved as a signal peptide; it reads MAIYSSFWIRLYFTFRFFCYFLTSVVA. At 28–1105 the chain is on the extracellular side; that stretch reads SDVSFLGDFS…KYDHIGQPRY (1078 aa). Asn44, Asn61, Asn103, Asn118, Asn124, Asn156, Asn161, Asn182, Asn190, Asn213, Asn224, Asn306, Asn391, Asn413, Asn419, Asn510, Asn519, Asn554, Asn562, Asn607, Asn630, Asn713, Asn722, Asn743, Asn769, Asn793, Asn807, Asn824, Asn840, Asn848, Asn876, Asn893, Asn899, Asn916, Asn945, Asn1009, Asn1030, and Asn1055 each carry an N-linked (GlcNAc...) asparagine glycan. Residues 1106–1126 form a helical membrane-spanning segment; the sequence is VVIISLGISIGVMFLIMSGSI. Over 1127–1155 the chain is Cytoplasmic; sequence VVEIIHWFFSEHVETLHDYSNFLKELKTQ.

It belongs to the RAX2 family. Interacts with for3 and tea1.

It is found in the cell membrane. Functionally, controls cell polarity, through the G1 phase of mitosis, via regulation of for3 localization. Required for actin cable formation where it directs the spatial distribution of the actin cables. The chain is Polarized growth protein rax2 from Schizosaccharomyces pombe (strain 972 / ATCC 24843) (Fission yeast).